The following is a 445-amino-acid chain: RNA pseudouridine synthase 2, chloroplastic (445 aa).

A chloroplast-targeting transit peptide spans methionine 1–asparagine 44. The segment at alanine 47–proline 66 is disordered. The S4 RNA-binding domain maps to serine 72–aspartate 147. Residue aspartate 235 is part of the active site.

Belongs to the pseudouridine synthase RluA family.

It localises to the plastid. It is found in the chloroplast. It carries out the reaction a uridine in RNA = a pseudouridine in RNA. The protein is RNA pseudouridine synthase 2, chloroplastic of Oryza sativa subsp. japonica (Rice).